A 262-amino-acid chain; its full sequence is Global transcriptional regulator CodY (262 aa).

The interval 1-159 (MAHLLEKTRK…ASTVVGIQLL (159 aa)) is GAF domain. A DNA-binding region (H-T-H motif) is located at residues 207–226 (ASVIADRIGITRSVIVNALR).

This sequence belongs to the CodY family.

The protein resides in the cytoplasm. DNA-binding global transcriptional regulator which is involved in the adaptive response to starvation and acts by directly or indirectly controlling the expression of numerous genes in response to nutrient availability. During rapid exponential growth, CodY is highly active and represses genes whose products allow adaptation to nutrient depletion. This Streptococcus pneumoniae serotype 4 (strain ATCC BAA-334 / TIGR4) protein is Global transcriptional regulator CodY.